The following is a 293-amino-acid chain: GTP cyclohydrolase FolE2 (293 aa).

The protein belongs to the GTP cyclohydrolase IV family.

The catalysed reaction is GTP + H2O = 7,8-dihydroneopterin 3'-triphosphate + formate + H(+). It functions in the pathway cofactor biosynthesis; 7,8-dihydroneopterin triphosphate biosynthesis; 7,8-dihydroneopterin triphosphate from GTP: step 1/1. Functionally, converts GTP to 7,8-dihydroneopterin triphosphate. This chain is GTP cyclohydrolase FolE2, found in Pseudomonas entomophila (strain L48).